The chain runs to 255 residues: 4-diphosphocytidyl-2-C-methyl-D-erythritol kinase (255 aa).

Lysine 6 is a catalytic residue. Position 95–105 (95–105 (PVCAGLGGGSS)) interacts with ATP. Aspartate 137 is an active-site residue.

The protein belongs to the GHMP kinase family. IspE subfamily.

It carries out the reaction 4-CDP-2-C-methyl-D-erythritol + ATP = 4-CDP-2-C-methyl-D-erythritol 2-phosphate + ADP + H(+). The protein operates within isoprenoid biosynthesis; isopentenyl diphosphate biosynthesis via DXP pathway; isopentenyl diphosphate from 1-deoxy-D-xylulose 5-phosphate: step 3/6. Functionally, catalyzes the phosphorylation of the position 2 hydroxy group of 4-diphosphocytidyl-2C-methyl-D-erythritol. In Campylobacter jejuni subsp. jejuni serotype O:2 (strain ATCC 700819 / NCTC 11168), this protein is 4-diphosphocytidyl-2-C-methyl-D-erythritol kinase.